Reading from the N-terminus, the 362-residue chain is Alanine racemase (362 aa).

Catalysis depends on K33, which acts as the Proton acceptor; specific for D-alanine. K33 carries the N6-(pyridoxal phosphate)lysine modification. R129 is a substrate binding site. Y254 serves as the catalytic Proton acceptor; specific for L-alanine. M302 contacts substrate.

Belongs to the alanine racemase family. It depends on pyridoxal 5'-phosphate as a cofactor.

The enzyme catalyses L-alanine = D-alanine. It functions in the pathway amino-acid biosynthesis; D-alanine biosynthesis; D-alanine from L-alanine: step 1/1. Catalyzes the interconversion of L-alanine and D-alanine. May also act on other amino acids. This Xylella fastidiosa (strain 9a5c) protein is Alanine racemase (alr).